The primary structure comprises 33 residues: Brevinin-2JD (33 aa).

A disulfide bridge links Cys27 with Cys33.

As to expression, expressed by the skin glands.

It is found in the secreted. Functionally, has antibacterial activity against E.coli ATCC 25992 (MIC=38 uM), E.coli CIB 84492 (MIC=38 uM), S.aureus ATCC 25923 (MIC=19 uM) and S.aureus CIB 85462 (MIC=19 uM). Has antifungal activity against C.albicans (MIC=19 uM). Has weak hemolytic activity against rabbit erythrocytes. The protein is Brevinin-2JD of Odorrana jingdongensis (Jingdong frog).